The sequence spans 500 residues: NAD(P)H-quinone oxidoreductase chain 4, chloroplastic (500 aa).

The next 14 membrane-spanning stretches (helical) occupy residues 4–24 (FPWLTIIVVFPISAGLSIFFL), 37–57 (ICICLLELLLMTYVFCYHFQL), 87–107 (IGPILLTGFITTLATLAAWPV), 113–130 (LFHFLMLAMYSGQIGLFS), 134–154 (LLLFFLMWELELIPVYLLLSM), 167–187 (FILYTAGGSVFLLMGVLGMGL), 211–231 (ILFYFGFLIAYAVKLPIIPLH), 242–262 (HYSTCMLLAGILLKMGAYGLV), 272–292 (AHSIFSPWLVLAGTLQIIYAA), 305–325 (IAYSSVSHMGFTIIGIGSITD), 330–350 (GAILQLLSHGFLGAALFFLAG), 386–406 (LALPGMSGFVAEAVVFFGIIT), 416–436 (ILITFVMAIGMILTPIYLLSM), and 462–482 (LFVSICIFLPVIGIGIYPDFV).

The protein belongs to the complex I subunit 4 family.

The protein localises to the plastid. It is found in the chloroplast thylakoid membrane. The enzyme catalyses a plastoquinone + NADH + (n+1) H(+)(in) = a plastoquinol + NAD(+) + n H(+)(out). The catalysed reaction is a plastoquinone + NADPH + (n+1) H(+)(in) = a plastoquinol + NADP(+) + n H(+)(out). The protein is NAD(P)H-quinone oxidoreductase chain 4, chloroplastic of Acorus calamus var. americanus (American sweet flag).